The chain runs to 3623 residues: Cubilin (3623 aa).

An N-terminal signal peptide occupies residues 1–20; that stretch reads MSSQFLWGFVTLLMIAELDG. The propeptide at 21 to 32 is removed in mature form; sequence KTGKPEQRGQKR. Positions 39 to 46 are interaction with AMN; that stretch reads PRMTTEEG. N95 carries an N-linked (GlcNAc...) asparagine glycan. Positions 129–165 constitute an EGF-like 1 domain; that stretch reads ERKVCSSNPCLNGGTCVNLHDSFVCICPSQWKGLFCS. Disulfide bonds link C133-C144, C138-C153, C155-C164, C171-C187, C181-C196, C198-C207, C264-C277, C271-C286, and C289-C300. Residues 167 to 208 form the EGF-like 2; calcium-binding domain; the sequence is DVNECVVYSGTPFGCQSGSTCVNTVGSFRCDCTPDTYGPQCA. One can recognise an EGF-like 3; calcium-binding domain in the interval 260-301; the sequence is DKDECSLQPSPCSEHAQCFNTQGSFYCGACPKGWQGNGYECQ. The EGF-like 4; calcium-binding domain maps to 302 to 345; the sequence is DINECEINNGGCSQAPLVPCLNTPGSFSCGNCPAGFSGDGRVCT. EGF-like domains are found at residues 346–385 and 395–430; these read PVDI…YTGN and LSNI…QNCT. 13 disulfide bridges follow: C350–C363, C357–C376, C399–C409, C404–C418, C420–C429, C436–C447, C441–C456, C458–C467, C474–C500, C527–C549, C590–C616, C643–C665, and C708–C734. A glycan (N-linked (GlcNAc...) asparagine) is linked at N428. The EGF-like 7; calcium-binding domain occupies 432–468; sequence NINDCSSNPCLNGGTCIDGINGFTCDCTSSWTGYYCQ. 27 CUB domains span residues 474 to 586, 590 to 702, 708 to 816, 817 to 928, 932 to 1042, 1048 to 1161, 1165 to 1277, 1278 to 1389, 1391 to 1506, 1510 to 1619, 1620 to 1734, 1738 to 1850, 1852 to 1963, 1978 to 2091, 2092 to 2213, 2217 to 2334, 2336 to 2448, 2452 to 2565, 2570 to 2687, 2689 to 2801, 2805 to 2919, 2920 to 3035, 3037 to 3150, 3157 to 3274, 3278 to 3393, 3395 to 3507, and 3511 to 3623; these read CGGI…WEAK, CGGI…YLTT, CGGN…YQVA, CGGM…FSSD, CGEV…YEAI, CLYD…WDGS, CGGN…FRQR, CDNV…WFTH, CGGE…WRAV, CGGI…FREE, CGGR…YSAS, CGGS…FKNI, GNNN…WFAV, CGGF…FHKS, CGGY…YEAK, CGGT…YSIA, CGGT…FKSS, CGGD…YTST, CGGF…YSFT, CGGI…WTTN, CGGT…FISR, CGRT…YRAI, CGGI…FRET, CGGY…YTFV, CGGT…YQIA, CNRE…WTSS, and CGGT…MWSS. An N-linked (GlcNAc...) asparagine glycan is attached at N491. N711 and N749 each carry an N-linked (GlcNAc...) asparagine glycan. Residues C761 and C779 are joined by a disulfide bond. N-linked (GlcNAc...) asparagine glycosylation is present at N781. C817 and C842 form a disulfide bridge. N857 carries an N-linked (GlcNAc...) asparagine glycan. 2 disulfides stabilise this stretch: C869–C891 and C932–C958. N957 carries N-linked (GlcNAc...) asparagine glycosylation. E980 contributes to the Ca(2+) binding site. N-linked (GlcNAc...) asparagine glycosylation is present at N984. A disulfide bridge links C985 with C1005. Residues D988, D1027, and L1030 each contribute to the Ca(2+) site. C1048 and C1074 are disulfide-bonded. Positions 1096, 1105, and 1146 each coordinate Ca(2+). C1165 and C1191 are oxidised to a cystine. N1168 is a glycosylation site (N-linked (GlcNAc...) asparagine). Ca(2+) contacts are provided by E1213, D1221, D1262, G1264, and Q1265. The cysteines at positions 1218 and 1240 are disulfide-linked. C1278 and C1306 form a disulfide bridge. 3 N-linked (GlcNAc...) asparagine glycosylation sites follow: N1285, N1307, and N1319. E1328 is a Ca(2+) binding site. N1332 carries an N-linked (GlcNAc...) asparagine glycan. A disulfide bridge links C1333 with C1351. The Ca(2+) site is built by D1336, D1373, and I1375. 2 disulfide bridges follow: C1391/C1417 and C1444/C1466. N1500 is a glycosylation site (N-linked (GlcNAc...) asparagine). An intrachain disulfide couples C1510 to C1536. Residues N1551, N1646, and N1671 are each glycosylated (N-linked (GlcNAc...) asparagine). C1620 and C1647 form a disulfide bridge. 3 disulfide bridges follow: C1675/C1697, C1738/C1764, and C1791/C1812. 2 N-linked (GlcNAc...) asparagine glycosylation sites follow: N1802 and N1819. Cystine bridges form between C1905/C1927, C1978/C2006, and C2032/C2054. N2085 and N2117 each carry an N-linked (GlcNAc...) asparagine glycan. Intrachain disulfides connect C2092–C2118 and C2217–C2247. N2274 carries N-linked (GlcNAc...) asparagine glycosylation. 5 disulfides stabilise this stretch: C2275/C2297, C2336/C2363, C2390/C2411, C2452/C2478, and C2505/C2527. An N-linked (GlcNAc...) asparagine glycan is attached at N2400. 3 N-linked (GlcNAc...) asparagine glycosylation sites follow: N2531, N2581, and N2610. A disulfide bridge links C2570 with C2599. 7 disulfides stabilise this stretch: C2628-C2649, C2689-C2715, C2742-C2764, C2805-C2831, C2860-C2883, C2920-C2946, and C2977-C2999. N2813, N2875, N2945, and N2989 each carry an N-linked (GlcNAc...) asparagine glycan. At T3008 the chain carries Phosphothreonine. 2 cysteine pairs are disulfide-bonded: C3037–C3064 and C3091–C3113. Residues N3042, N3106, N3125, and N3165 are each glycosylated (N-linked (GlcNAc...) asparagine). Disulfide bonds link C3157-C3185 and C3215-C3237. 3 N-linked (GlcNAc...) asparagine glycosylation sites follow: N3268, N3283, and N3290. 2 disulfides stabilise this stretch: C3278/C3306 and C3332/C3354. Residues N3357, N3400, and N3430 are each glycosylated (N-linked (GlcNAc...) asparagine). Residues C3395 and C3421 are joined by a disulfide bond. Cystine bridges form between C3448–C3470, C3511–C3537, and C3564–C3586. N3533 carries N-linked (GlcNAc...) asparagine glycosylation.

In terms of assembly, interacts with AMN. Component of the cubam complex composed of one CUBN trimer and one AMN chain. The cubam complex can dimerize. Interacts with LRP2 in a dual-receptor complex in a calcium-dependent manner. Found in a complex with PID1/PCLI1, LRP1 and CUBNI. Interacts with LRP1 and PID1/PCLI1. In terms of processing, the precursor is cleaved by a trans-Golgi proteinase furin, removing a propeptide. N-glycosylated. Expressed to intestinal, renal and yalk sac apical membranes. In kidney, expressed in the proximal tubule.

It is found in the cell membrane. It localises to the endosome membrane. Its subcellular location is the lysosome membrane. Endocytic receptor which plays a role in lipoprotein, vitamin and iron metabolism by facilitating their uptake. Acts together with LRP2 to mediate endocytosis of high-density lipoproteins, GC, hemoglobin, ALB, TF and SCGB1A1. Acts together with AMN to mediate endocytosis of the CBLIF-cobalamin complex. Binds to ALB, MB, Kappa and lambda-light chains, TF, hemoglobin, GC, SCGB1A1, APOA1, high density lipoprotein, and the CBLIF-cobalamin complex. Ligand binding requires calcium. Serves as important transporter in several absorptive epithelia, including intestine, renal proximal tubules and embryonic yolk sac. May play an important role in the development of the peri-implantation embryo through internalization of APOA1 and cholesterol. Binds to LGALS3 at the maternal-fetal interface. This is Cubilin (Cubn) from Rattus norvegicus (Rat).